Here is a 207-residue protein sequence, read N- to C-terminus: Guanylate kinase (207 aa).

The Guanylate kinase-like domain maps to 4–184 (GTLYIVSAPS…ALSDLKTIIR (181 aa)). Residue 11–18 (APSGAGKS) participates in ATP binding.

This sequence belongs to the guanylate kinase family.

It localises to the cytoplasm. It carries out the reaction GMP + ATP = GDP + ADP. Its function is as follows. Essential for recycling GMP and indirectly, cGMP. This is Guanylate kinase from Yersinia pestis bv. Antiqua (strain Antiqua).